The primary structure comprises 405 residues: S-adenosylmethionine synthase (405 aa).

Gly-139–Asp-144 contributes to the ATP binding site.

Belongs to the AdoMet synthase 2 family. Requires Mg(2+) as cofactor.

It carries out the reaction L-methionine + ATP + H2O = S-adenosyl-L-methionine + phosphate + diphosphate. It functions in the pathway amino-acid biosynthesis; S-adenosyl-L-methionine biosynthesis; S-adenosyl-L-methionine from L-methionine: step 1/1. Functionally, catalyzes the formation of S-adenosylmethionine from methionine and ATP. This Thermococcus onnurineus (strain NA1) protein is S-adenosylmethionine synthase.